The primary structure comprises 540 residues: Patellin-4 (540 aa).

S53 bears the Phosphoserine mark. Positions 61-183 form a coiled coil; it reads FADLKESEKK…EKKTEDVVTE (123 aa). The interval 89–140 is disordered; sequence LKTKKKESSPMKEKKEEVVKPEAEVEKKKEEAAEEKVEEEKKSEAVVTEEAP. The span at 94–140 shows a compositional bias: basic and acidic residues; it reads KESSPMKEKKEEVVKPEAEVEKKKEEAAEEKVEEEKKSEAVVTEEAP. A Glycyl lysine isopeptide (Lys-Gly) (interchain with G-Cter in ubiquitin) cross-link involves residue K249. A CRAL-TRIO domain is found at 258–428; the sequence is GEEFGEDLAT…QYGGFKTVDD (171 aa). A GOLD domain is found at 433-534; that stretch reads NETVSEVVVK…KKKVLYRYRT (102 aa).

Belongs to the patellin family.

Its subcellular location is the membrane. The protein localises to the cytoplasm. Its function is as follows. Carrier protein that may be involved in membrane-trafficking events associated with cell plate formation during cytokinesis. Binds to some hydrophobic molecules such as phosphoinositides and promotes their transfer between the different cellular sites. In Arabidopsis thaliana (Mouse-ear cress), this protein is Patellin-4 (PATL4).